The primary structure comprises 398 residues: Basic helix-loop-helix neural transcription factor TAP (398 aa).

Disordered stretches follow at residues 35-59 (ETEA…IPQP) and 102-144 (RATN…RSRS). Basic residues predominate over residues 127-141 (RPKRKYAVGKNRVTR). The bHLH domain maps to 154-206 (FRRMKANDRERNRMHNLNDALEKLRVTLPSLPEETKLTKIEILRFAHNYIFAL). Disordered stretches follow at residues 265 to 333 (AQHQ…QQFS) and 361 to 398 (QQSS…APQV). The span at 307–333 (HQQQQQPHQPHHLQPNPQQESSPQQFS) shows a compositional bias: low complexity. The span at 361-370 (QQSSFYSQTP) shows a compositional bias: polar residues.

Expressed in neuronal and glial precursors during differentiation. In the peripheral nervous system, expression is exclusively in one of the neurons that innervate each larval chemosensory organ. Expressed at a late stage in the development of one type of adult chemosensory organ, the gustatory bristles of the leg, wing and proboscis. Expressed very early in the development of a second type of chemosensory receptors, the olfactory organs of the antenna.

Its subcellular location is the nucleus. In terms of biological role, may play a role in the specification of the sugar-sensitive adult gustatory neuron and affect the response to sugar and salt. Regulated by POXN. The protein is Basic helix-loop-helix neural transcription factor TAP (tap) of Drosophila melanogaster (Fruit fly).